The following is a 321-amino-acid chain: MAYQIECLETRVEEDQGQYGQFALHPLAPGQGITVGNALRRVLLSNLPGSAVTAVRIAGVNHEFSTIPGVREDVMDILLQMKQLVIRSHTSEPQMGRLFAQAPENEPLTVTAGMVQLGSEVEVVNPNHYIATLMPGATLEMEFKIEKDRGYRSVERVRDDRLALDYLQLDAVFMPVRRVNYTVDSVRSAGAEGDRQLQDYLKLEIWTNGSLTPQDALNQAATILVDLFSPLKEVPLHTSEATATDDHDETGQIPIEQLNLSVRAYNCLKRAQVNTVADLLEYSQEELLEIKNFGQKSAEEVIEALQKHLGITLPPQKAARN.

The alpha N-terminal domain (alpha-NTD) stretch occupies residues 1–235 (MAYQIECLET…DLFSPLKEVP (235 aa)). Positions 252-321 (QIPIEQLNLS…TLPPQKAARN (70 aa)) are alpha C-terminal domain (alpha-CTD).

This sequence belongs to the RNA polymerase alpha chain family. As to quaternary structure, homodimer. In cyanobacteria the RNAP catalytic core is composed of 2 alpha, 1 beta, 1 beta', 1 gamma and 1 omega subunit. When a sigma factor is associated with the core the holoenzyme is formed, which can initiate transcription.

The enzyme catalyses RNA(n) + a ribonucleoside 5'-triphosphate = RNA(n+1) + diphosphate. DNA-dependent RNA polymerase catalyzes the transcription of DNA into RNA using the four ribonucleoside triphosphates as substrates. The chain is DNA-directed RNA polymerase subunit alpha from Thermosynechococcus vestitus (strain NIES-2133 / IAM M-273 / BP-1).